The primary structure comprises 284 residues: Bifunctional protein FolD 2 (284 aa).

NADP(+)-binding positions include 166–168 and isoleucine 232; that span reads GAS.

Belongs to the tetrahydrofolate dehydrogenase/cyclohydrolase family. In terms of assembly, homodimer.

The enzyme catalyses (6R)-5,10-methylene-5,6,7,8-tetrahydrofolate + NADP(+) = (6R)-5,10-methenyltetrahydrofolate + NADPH. The catalysed reaction is (6R)-5,10-methenyltetrahydrofolate + H2O = (6R)-10-formyltetrahydrofolate + H(+). The protein operates within one-carbon metabolism; tetrahydrofolate interconversion. Catalyzes the oxidation of 5,10-methylenetetrahydrofolate to 5,10-methenyltetrahydrofolate and then the hydrolysis of 5,10-methenyltetrahydrofolate to 10-formyltetrahydrofolate. This Pseudomonas putida (strain ATCC 47054 / DSM 6125 / CFBP 8728 / NCIMB 11950 / KT2440) protein is Bifunctional protein FolD 2.